Here is a 237-residue protein sequence, read N- to C-terminus: Ribitol-5-phosphate cytidylyltransferase (237 aa).

CTP is bound by residues 7–10 (LAGG) and 80–86 (GEDRNET).

The protein belongs to the IspD/TarI cytidylyltransferase family. TarI subfamily.

The catalysed reaction is D-ribitol 5-phosphate + CTP + H(+) = CDP-L-ribitol + diphosphate. It participates in cell wall biogenesis; poly(ribitol phosphate) teichoic acid biosynthesis. Its function is as follows. Catalyzes the transfer of the cytidylyl group of CTP to D-ribitol 5-phosphate. This Listeria monocytogenes serotype 4b (strain F2365) protein is Ribitol-5-phosphate cytidylyltransferase.